A 1823-amino-acid chain; its full sequence is WD repeat-containing protein DDB_G0292056 (1823 aa).

The tract at residues 1–68 (MTYNNNNNYL…IGNSSGGGGV (68 aa)) is disordered. Residues 16-61 (TSTSTSTSTSTPTSTKTSPLNTSSSSNILKSNSRNPSPNNPTNIGN) are compositionally biased toward low complexity. 6 WD repeats span residues 138–177 (QSKWEVGVVDWNSQSPNLVASSSNQDTFIWDIENPKYPLL), 182–222 (SHQR…KAVK), 228–267 (SHILGAIQVKWNRFNSNVLASAHESYLMIWDIRKDSQELN), 270–310 (VHSA…PKST), 312–354 (ITSN…YSTP), and 360–405 (GHTD…KDLF). Disordered regions lie at residues 418-461 (PTTT…LLST), 530-562 (QPDDDNNNNNLNNLNNNNNTQDNIDNNDDNNNN), 649-687 (NITETNNNNNNHNNSVQNNNNNNNNNNNNNNNSGGGFLK), 714-778 (IDIS…YRPG), 805-840 (ILTNLNNNSNNNSGSGGGGSSNMNASITTSTTTNDQ), 883-940 (IPNN…SSTS), 966-996 (SSSSSISDTTNNTSNTTQNIQNTTKNINPPR), 1014-1058 (NNIT…NDNP), and 1122-1186 (QQLV…NGKS). 2 stretches are compositionally biased toward low complexity: residues 419-432 (TTTTTTTTATTTTT) and 440-461 (LNESTDNNNNTNSLNSSTLLST). Composition is skewed to low complexity over residues 654–680 (NNNNNNHNNSVQNNNNNNNNNNNNNNN) and 717–748 (SQQQQQQQQQQAATTSTSSSSSSSSNTQQQQQ). Polar residues-rich tracts occupy residues 749-768 (FLTATVSNKGGTVLSKSPTS) and 827-840 (MNASITTSTTTNDQ). Composition is skewed to low complexity over residues 885-926 (NNNK…SSNN), 966-993 (SSSSSISDTTNNTSNTTQNIQNTTKNIN), 1014-1041 (NNITGNNNINSNSNTTNNLTSPNPNRLN), and 1127-1183 (SSSP…NNGN). One copy of the WD 7 repeat lies at 1207-1250 (ANSYILSGKPVEEICKYNSELAEKENRKDLVKLWNTLGMITDSK). Disordered regions lie at residues 1264–1307 (SHFG…LHQS), 1697–1725 (QQQPQHYQQHRHSMSGTSHYHQQQPHTHN), and 1764–1823 (PQQE…MFSN). The span at 1282-1293 (STGIASSTGSNS) shows a compositional bias: low complexity. Residues 1710-1725 (MSGTSHYHQQQPHTHN) show a composition bias toward polar residues.

In Dictyostelium discoideum (Social amoeba), this protein is WD repeat-containing protein DDB_G0292056.